The primary structure comprises 318 residues: Retinol dehydrogenase 5 (318 aa).

A helical transmembrane segment spans residues 1 to 21 (MWLPLLLGALLWAVLWLLRDR). The Lumenal segment spans residues 22–288 (QSLPASNAFV…TRYSPGWDAK (267 aa)). Residue 32-56 (FITGCDSGFGRLLALQLDQRGFRVL) coordinates NADP(+). An N-linked (GlcNAc...) asparagine glycan is attached at asparagine 160. Serine 163 is a binding site for substrate. Residue tyrosine 175 is the Proton acceptor of the active site. The helical transmembrane segment at 289–309 (LLWLPASYLPASLVDAVLTWV) threads the bilayer. The Cytoplasmic segment spans residues 310–318 (LPKPAQAVY).

Belongs to the short-chain dehydrogenases/reductases (SDR) family. In terms of assembly, homodimer. As to expression, widely expressed. In the eye, abundant in the retinal pigment epithelium.

The protein localises to the endoplasmic reticulum membrane. The catalysed reaction is 11-cis-retinol + NAD(+) = 11-cis-retinal + NADH + H(+). It carries out the reaction 9-cis-retinol + NAD(+) = 9-cis-retinal + NADH + H(+). The enzyme catalyses 13-cis-retinol + NAD(+) = 13-cis-retinal + NADH + H(+). It catalyses the reaction androsterone + NAD(+) = 5alpha-androstan-3,17-dione + NADH + H(+). The catalysed reaction is 5alpha-androstane-3alpha,17beta-diol + NAD(+) = 17beta-hydroxy-5alpha-androstan-3-one + NADH + H(+). The protein operates within cofactor metabolism; retinol metabolism. Its activity is regulated as follows. Inhibited by 9-cis-, 13-cis- and all-trans-retinoic acids, with the most potent inhibitor being 13-cis-retinoic acid. Weakly inhibited by oleic acid. Functionally, catalyzes the oxidation of cis-isomers of retinol, including 11-cis-, 9-cis-, and 13-cis-retinol in an NAD-dependent manner. Has no activity towards all-trans retinal. Plays a significant role in 11-cis retinol oxidation in the retinal pigment epithelium cells (RPE). Also recognizes steroids (androsterone, androstanediol) as its substrates. The polypeptide is Retinol dehydrogenase 5 (Homo sapiens (Human)).